The sequence spans 479 residues: Adenosylhomocysteinase (479 aa).

The substrate site is built by Thr56, Asp133, and Glu199. 200-202 (TTT) is a binding site for NAD(+). Substrate-binding residues include Lys229 and Asp233. NAD(+) is bound by residues Asn234, 263 to 268 (GYGDVG), Glu286, Asn321, 342 to 344 (IGH), and Asn390.

This sequence belongs to the adenosylhomocysteinase family. In terms of assembly, homotetramer. The cofactor is NAD(+).

The catalysed reaction is S-adenosyl-L-homocysteine + H2O = L-homocysteine + adenosine. It functions in the pathway amino-acid biosynthesis; L-homocysteine biosynthesis; L-homocysteine from S-adenosyl-L-homocysteine: step 1/1. Its function is as follows. Adenosylhomocysteine is a competitive inhibitor of S-adenosyl-L-methionine-dependent methyl transferase reactions; therefore adenosylhomocysteinase may play a key role in the control of methylations via regulation of the intracellular concentration of adenosylhomocysteine. This Plasmodium yoelii yoelii protein is Adenosylhomocysteinase.